We begin with the raw amino-acid sequence, 331 residues long: MFFWYQNHVIAKLLVWLLFPFSLVFWFISVIRRRLFRLNWLKSYRSPVPVLIVGNLSVGGNGKTPVTIWLVKQFQSRGIKVGVISRGYGSRAEYYPYLVKIDDNPTISGDEPLLIAQRTGVPVCISPNRQQAIELLLAQFNCDLIISDDGLQHYKLQRDFEIVVIDGERVFGNGFVMPAGPLRELPNRLAEVDLIINNGKLTGYSNTLMLLLPKFAVNLVSGEKKLLRDFQRIPLNAIAGIGYPQRFFNMLRDFALTLEKTQSFQDHQDFDAVHFSYFSSNQPLFMTEKDAVKCRPFAQANWWYVPVEADIQGEEVERFMQVVSQQIKEKK.

An ATP-binding site is contributed by 57–64; that stretch reads SVGGNGKT.

It belongs to the LpxK family.

The enzyme catalyses a lipid A disaccharide + ATP = a lipid IVA + ADP + H(+). It participates in glycolipid biosynthesis; lipid IV(A) biosynthesis; lipid IV(A) from (3R)-3-hydroxytetradecanoyl-[acyl-carrier-protein] and UDP-N-acetyl-alpha-D-glucosamine: step 6/6. Functionally, transfers the gamma-phosphate of ATP to the 4'-position of a tetraacyldisaccharide 1-phosphate intermediate (termed DS-1-P) to form tetraacyldisaccharide 1,4'-bis-phosphate (lipid IVA). The chain is Tetraacyldisaccharide 4'-kinase from Histophilus somni (strain 2336) (Haemophilus somnus).